Consider the following 1368-residue polypeptide: MAP3K epsilon protein kinase 1 (1368 aa).

Residues 20 to 274 form the Protein kinase domain; sequence YMLGDEIGKG…AKTLLSHPWI (255 aa). HEAT repeat units lie at residues 25-62 and 86-125; these read EIGK…EDLN and SKTK…AVYI. ATP is bound by residues 26-34 and Lys-49; that span reads IGKGAYGRV. Asp-144 functions as the Proton acceptor in the catalytic mechanism. Residues 218–256 form an HEAT 3 repeat; it reads PYYDLQPMPALFRIVQDDNPPIPDSLSPDITDFLRQCFK. 2 disordered regions span residues 296–415 and 430–507; these read EATA…KNTS and QTSH…PVAD. Residues 351–364 are compositionally biased toward acidic residues; sequence LGEEGTDNSEDDIM. Basic and acidic residues-rich tracts occupy residues 388–399 and 470–486; these read SDFHGKSERGET and SLHD…EGKP. Over residues 488–502 the composition is skewed to polar residues; sequence EASTSMPTSNVNQGD. HEAT repeat units follow at residues 533–571, 628–653, 654–695, 699–737, and 750–788; these read SNDG…LFPL, IPKS…DFQE, NACL…SSPL, MFIA…VFKL, and AAKN…RVRS. The interval 777-883 is disordered; sequence GGLDGQAPRV…ISLSANRTST (107 aa). The span at 791-808 shows a compositional bias: polar residues; it reads LDPNNPIFGQNETSSLSM. Basic and acidic residues-rich tracts occupy residues 813-826 and 836-852; these read DVLK…EEPS and SDVH…DKPR. HEAT repeat units follow at residues 903–940, 1025–1063, 1067–1105, 1112–1150, 1154–1191, 1196–1234, 1258–1281, 1282–1318, and 1348–1368; these read EQVR…HESR, ATSS…ADTT, YMCS…DPNC, ADAI…INKR, QAAE…ASRN, LRAH…DNRK, RHFV…NKTL, AVNG…HHPR, and QVLV…NTIL.

It belongs to the protein kinase superfamily. Ser/Thr protein kinase family. As to quaternary structure, interacts with SGP1. Post-translationally, autophosphorylated. Expressed in both the sporophytic and the gametophytic tissues, especially in dividing cells. Mostly present in flower buds and mature flowers. Also accumulates in embryos, in roots apices, trichomes and ovule integuments.

It localises to the cytoplasm. The protein localises to the cytoskeleton. It is found in the microtubule organizing center. Its subcellular location is the nucleus. The protein resides in the nucleolus. It localises to the cell membrane. The enzyme catalyses L-seryl-[protein] + ATP = O-phospho-L-seryl-[protein] + ADP + H(+). It carries out the reaction L-threonyl-[protein] + ATP = O-phospho-L-threonyl-[protein] + ADP + H(+). Functionally, serine/threonine-protein kinase involved in the spatial and temporal control system organizing cortical activities in mitotic and postmitotic cells. Required for the normal functioning of the plasma membrane in developing pollen. Involved in the regulation of cell expansion, cell elongation, and embryo development. The chain is MAP3K epsilon protein kinase 1 from Arabidopsis thaliana (Mouse-ear cress).